Reading from the N-terminus, the 266-residue chain is MQTDNTKSNTNKTAKQEWGSFAFVICIALLIRILIMEPFTVPTGSMKATILENDYIFSTKYSYGYSNYSLSFFDFIPLFKGRIFAREPDRGDIVVFRPPNDMSVRYIKRLIGLPGDKIQLIDDVIYINDKKIERTEVGTYISEEGIKYLKFKETLPNGRTYFSYKLAPIYGVIYNDRYGNTDVFYVPEGKYFFLGDNRDQSNDSRVNLGFVPFENFIAKAQFIWFSTKITWWDNDIGVINLVLKLKPWVESVRLNRIFRNLYNTDA.

Residues 1-20 (MQTDNTKSNTNKTAKQEWGS) lie on the Cytoplasmic side of the membrane. The chain crosses the membrane as a helical span at residues 21 to 41 (FAFVICIALLIRILIMEPFTV). Residues 42-266 (PTGSMKATIL…IFRNLYNTDA (225 aa)) lie on the Periplasmic side of the membrane. Residues serine 45 and lysine 108 contribute to the active site.

It belongs to the peptidase S26 family.

The protein resides in the cell inner membrane. The catalysed reaction is Cleavage of hydrophobic, N-terminal signal or leader sequences from secreted and periplasmic proteins.. Functionally, complements E.coli mutants temperature-sensitive for LepB function. The chain is Signal peptidase I (lepB) from Rickettsia rickettsii (strain Sheila Smith).